We begin with the raw amino-acid sequence, 123 residues long: Large ribosomal subunit protein bL12 (123 aa).

This sequence belongs to the bacterial ribosomal protein bL12 family. As to quaternary structure, homodimer. Part of the ribosomal stalk of the 50S ribosomal subunit. Forms a multimeric L10(L12)X complex, where L10 forms an elongated spine to which 2 to 4 L12 dimers bind in a sequential fashion. Binds GTP-bound translation factors.

In terms of biological role, forms part of the ribosomal stalk which helps the ribosome interact with GTP-bound translation factors. Is thus essential for accurate translation. The protein is Large ribosomal subunit protein bL12 of Geobacillus thermodenitrificans (strain NG80-2).